The primary structure comprises 229 residues: Cytidylate kinase (229 aa).

Position 12–20 (12–20) interacts with ATP; sequence GPSGSGKGT.

This sequence belongs to the cytidylate kinase family. Type 1 subfamily.

Its subcellular location is the cytoplasm. It carries out the reaction CMP + ATP = CDP + ADP. The enzyme catalyses dCMP + ATP = dCDP + ADP. The polypeptide is Cytidylate kinase (Pseudomonas fluorescens (strain ATCC BAA-477 / NRRL B-23932 / Pf-5)).